A 365-amino-acid polypeptide reads, in one-letter code: GTPase Obg (365 aa).

Positions 1-159 (MKFIDEARIE…RMLKLELKVL (159 aa)) constitute an Obg domain. Residues 160-334 (ADVGLLGMPN…LVYAIKDHLA (175 aa)) enclose the OBG-type G domain. Residues 166–173 (GMPNAGKS), 191–195 (FTTLH), 213–216 (DIPG), 284–287 (NKLD), and 315–317 (SAL) each bind GTP. Positions 173 and 193 each coordinate Mg(2+).

It belongs to the TRAFAC class OBG-HflX-like GTPase superfamily. OBG GTPase family. As to quaternary structure, monomer. The cofactor is Mg(2+).

Its subcellular location is the cytoplasm. Functionally, an essential GTPase which binds GTP, GDP and possibly (p)ppGpp with moderate affinity, with high nucleotide exchange rates and a fairly low GTP hydrolysis rate. Plays a role in control of the cell cycle, stress response, ribosome biogenesis and in those bacteria that undergo differentiation, in morphogenesis control. The polypeptide is GTPase Obg (Cupriavidus metallidurans (strain ATCC 43123 / DSM 2839 / NBRC 102507 / CH34) (Ralstonia metallidurans)).